We begin with the raw amino-acid sequence, 393 residues long: Reticulon-like protein 2 (393 aa).

The span at 1–21 (MNRNTTTNKNANLNNSRNANA) shows a compositional bias: low complexity. The interval 1-25 (MNRNTTTNKNANLNNSRNANAPGEA) is disordered. The Cytoplasmic portion of the chain corresponds to 1 to 60 (MNRNTTTNKNANLNNSRNANAPGEAGHQNKTGLIYWTNPSKSGASFAATLVSLLILRNVN). The Reticulon domain occupies 30-236 (KTGLIYWTNP…SISNENKSST (207 aa)). The helical transmembrane segment at 61-81 (VISVLLKIGYMVLFTSFAVEL) threads the bilayer. Residues 82-149 (STKVLFDKGV…IGVSLYFLHG (68 aa)) lie on the Lumenal side of the membrane. N-linked (GlcNAc...) asparagine glycosylation occurs at Asn-137. A helical transmembrane segment spans residues 150–170 (LFAIFSMNTVLIMTTIFLYTV). The Cytoplasmic segment spans residues 171–393 (PLIYDRKQAR…HGLKQKLQHA (223 aa)). Disordered regions lie at residues 214-313 (IIPP…DVKT) and 339-393 (GDYN…LQHA). Residues 220–285 (DEGSYSTSIS…PVSQNENIGT (66 aa)) are compositionally biased toward polar residues. Position 278 is a phosphoserine (Ser-278). Positions 289-313 (GKQEIPTEKDFNNRHENFSKPDVKT) are enriched in basic and acidic residues. The span at 365–376 (PAESQSIPIKNN) shows a compositional bias: polar residues. Over residues 381–393 (KTTHGLKQKLQHA) the composition is skewed to basic residues.

It localises to the endoplasmic reticulum membrane. The sequence is that of Reticulon-like protein 2 (RTN2) from Saccharomyces cerevisiae (strain ATCC 204508 / S288c) (Baker's yeast).